We begin with the raw amino-acid sequence, 706 residues long: Kinesin-like protein KIP2 (706 aa).

Composition is skewed to low complexity over residues 1 to 28 (MIQK…QSPS) and 36 to 63 (SNLT…RSNS). Residues 1-139 (MIQKMSPSLR…QPRSNSHHGS (139 aa)) are disordered. One can recognise a Kinesin motor domain in the interval 102–493 (SITVTIRPKP…LRFASRAKNV (392 aa)). Positions 127-139 (RYSQPRSNSHHGS) are enriched in polar residues. ATP is bound at residue 202 to 209 (GMTGSGKT). The segment at 413–445 (VGSNIPSPSASGSSSSSGNATNNGTSPSNHIPY) is disordered. The span at 414–441 (GSNIPSPSASGSSSSSGNATNNGTSPSN) shows a compositional bias: low complexity. Coiled-coil stretches lie at residues 507-541 (NNDG…NIGE), 569-589 (MRAE…LLDK), and 612-689 (TLLE…RALK).

Belongs to the TRAFAC class myosin-kinesin ATPase superfamily. Kinesin family. In terms of assembly, might be dimeric.

The protein localises to the cytoplasm. Its subcellular location is the cytoskeleton. Functionally, required for assembly of the mitotic spindle. The chain is Kinesin-like protein KIP2 (KIP2) from Saccharomyces cerevisiae (strain ATCC 204508 / S288c) (Baker's yeast).